We begin with the raw amino-acid sequence, 580 residues long: Dihydroxy-acid dehydratase (580 aa).

A disordered region spans residues 1–31 (MPSGSSESPADALRASDSTPDIKPRSRDVTD). Residues 20 to 31 (PDIKPRSRDVTD) show a composition bias toward basic and acidic residues. Residue cysteine 69 coordinates [2Fe-2S] cluster. Aspartate 101 provides a ligand contact to Mg(2+). Cysteine 142 provides a ligand contact to [2Fe-2S] cluster. Residues aspartate 143 and lysine 144 each contribute to the Mg(2+) site. Residue lysine 144 is modified to N6-carboxylysine. Cysteine 219 is a [2Fe-2S] cluster binding site. Glutamate 470 contacts Mg(2+). Serine 496 acts as the Proton acceptor in catalysis.

The protein belongs to the IlvD/Edd family. In terms of assembly, homodimer. The cofactor is [2Fe-2S] cluster. Mg(2+) is required as a cofactor.

It carries out the reaction (2R)-2,3-dihydroxy-3-methylbutanoate = 3-methyl-2-oxobutanoate + H2O. It catalyses the reaction (2R,3R)-2,3-dihydroxy-3-methylpentanoate = (S)-3-methyl-2-oxopentanoate + H2O. Its pathway is amino-acid biosynthesis; L-isoleucine biosynthesis; L-isoleucine from 2-oxobutanoate: step 3/4. It participates in amino-acid biosynthesis; L-valine biosynthesis; L-valine from pyruvate: step 3/4. Functions in the biosynthesis of branched-chain amino acids. Catalyzes the dehydration of (2R,3R)-2,3-dihydroxy-3-methylpentanoate (2,3-dihydroxy-3-methylvalerate) into 2-oxo-3-methylpentanoate (2-oxo-3-methylvalerate) and of (2R)-2,3-dihydroxy-3-methylbutanoate (2,3-dihydroxyisovalerate) into 2-oxo-3-methylbutanoate (2-oxoisovalerate), the penultimate precursor to L-isoleucine and L-valine, respectively. This Mycobacterium sp. (strain JLS) protein is Dihydroxy-acid dehydratase.